The following is a 71-amino-acid chain: Mitochondrial import protein 1 (71 aa).

The helical transmembrane segment at 22 to 44 (YAAINLGLPFLNGVMLGFGEIFA) threads the bilayer.

This sequence belongs to the MIM1 family. In terms of assembly, component of the mitochondrial outer import machinery (MIM) complex containing at least mim1 and mim2. Interacts with mim2. Interacts with mitophagy receptor atg43.

Its subcellular location is the mitochondrion outer membrane. Its function is as follows. Component of the mitochondrial outer import machinery (MIM) complex that mediates transport of proteins into mitochondrial compartments. Promotes the insertion of tom70 into the outer mitochondrial membrane. Promotes the insertion of atg43 into the outer mitochondrial membrane. The MIM complex cooperates with the receptor tom70 in binding of precursor proteins and promotes their insertion and assembly into the outer membrane. Involved in import of the subset of proteins with multiple alpha-helical transmembrane segments. Required for the assembly of the TOM (translocase of outer membrane) receptor complex, which is responsible for the recognition and translocation of cytosolically synthesized mitochondrial preproteins. This is Mitochondrial import protein 1 from Schizosaccharomyces pombe (strain 972 / ATCC 24843) (Fission yeast).